The primary structure comprises 339 residues: DNA-directed RNA polymerase subunit alpha (339 aa).

Residues 1 to 233 (MVREEVAGST…DLFLPFLHAE (233 aa)) form an alpha N-terminal domain (alpha-NTD) region. Residues 264–339 (KKGIPLNCIF…IDLLKNKLSF (76 aa)) form an alpha C-terminal domain (alpha-CTD) region.

The protein belongs to the RNA polymerase alpha chain family. In terms of assembly, in plastids the minimal PEP RNA polymerase catalytic core is composed of four subunits: alpha, beta, beta', and beta''. When a (nuclear-encoded) sigma factor is associated with the core the holoenzyme is formed, which can initiate transcription.

It is found in the plastid. Its subcellular location is the chloroplast. The enzyme catalyses RNA(n) + a ribonucleoside 5'-triphosphate = RNA(n+1) + diphosphate. In terms of biological role, DNA-dependent RNA polymerase catalyzes the transcription of DNA into RNA using the four ribonucleoside triphosphates as substrates. This Bromus inermis (Smooth brome grass) protein is DNA-directed RNA polymerase subunit alpha.